Here is a 179-residue protein sequence, read N- to C-terminus: ATP synthase subunit delta (179 aa).

This sequence belongs to the ATPase delta chain family. As to quaternary structure, F-type ATPases have 2 components, F(1) - the catalytic core - and F(0) - the membrane proton channel. F(1) has five subunits: alpha(3), beta(3), gamma(1), delta(1), epsilon(1). F(0) has three main subunits: a(1), b(2) and c(10-14). The alpha and beta chains form an alternating ring which encloses part of the gamma chain. F(1) is attached to F(0) by a central stalk formed by the gamma and epsilon chains, while a peripheral stalk is formed by the delta and b chains.

It is found in the cell membrane. Functionally, f(1)F(0) ATP synthase produces ATP from ADP in the presence of a proton or sodium gradient. F-type ATPases consist of two structural domains, F(1) containing the extramembraneous catalytic core and F(0) containing the membrane proton channel, linked together by a central stalk and a peripheral stalk. During catalysis, ATP synthesis in the catalytic domain of F(1) is coupled via a rotary mechanism of the central stalk subunits to proton translocation. Its function is as follows. This protein is part of the stalk that links CF(0) to CF(1). It either transmits conformational changes from CF(0) to CF(1) or is implicated in proton conduction. In Bacillus sp. (strain PS3), this protein is ATP synthase subunit delta.